A 119-amino-acid chain; its full sequence is UPF0231 protein ECA3777 (119 aa).

The protein belongs to the UPF0231 family.

The protein is UPF0231 protein ECA3777 of Pectobacterium atrosepticum (strain SCRI 1043 / ATCC BAA-672) (Erwinia carotovora subsp. atroseptica).